The primary structure comprises 393 residues: Lipid-A-disaccharide synthase (393 aa).

Belongs to the LpxB family.

The enzyme catalyses a lipid X + a UDP-2-N,3-O-bis[(3R)-3-hydroxyacyl]-alpha-D-glucosamine = a lipid A disaccharide + UDP + H(+). The protein operates within bacterial outer membrane biogenesis; LPS lipid A biosynthesis. Condensation of UDP-2,3-diacylglucosamine and 2,3-diacylglucosamine-1-phosphate to form lipid A disaccharide, a precursor of lipid A, a phosphorylated glycolipid that anchors the lipopolysaccharide to the outer membrane of the cell. The polypeptide is Lipid-A-disaccharide synthase (Actinobacillus pleuropneumoniae serotype 3 (strain JL03)).